Here is a 353-residue protein sequence, read N- to C-terminus: Photosystem II protein D1 (353 aa).

Residue Thr-2 is modified to N-acetylthreonine. The residue at position 2 (Thr-2) is a Phosphothreonine. 3 helical membrane-spanning segments follow: residues 29 to 46 (YIGW…TATS), 118 to 133 (HFLL…EWEL), and 142 to 156 (WIAV…AATA). His-118 serves as a coordination point for chlorophyll a. Tyr-126 is a binding site for pheophytin a. [CaMn4O5] cluster contacts are provided by Asp-170 and Glu-189. Residues 197–218 (FHMLGVAGVFGGSLFSAMHGSL) traverse the membrane as a helical segment. His-198 is a binding site for chlorophyll a. A quinone is bound by residues His-215 and 264-265 (SF). His-215 contacts Fe cation. His-272 contributes to the Fe cation binding site. Residues 274–288 (FLAAWPVVGIWFTAL) traverse the membrane as a helical segment. Residues His-332, Glu-333, Asp-342, and Ala-344 each contribute to the [CaMn4O5] cluster site. Positions 345–353 (AVEANSIDG) are excised as a propeptide.

Belongs to the reaction center PufL/M/PsbA/D family. PSII is composed of 1 copy each of membrane proteins PsbA, PsbB, PsbC, PsbD, PsbE, PsbF, PsbH, PsbI, PsbJ, PsbK, PsbL, PsbM, PsbT, PsbX, PsbY, PsbZ, Psb30/Ycf12, at least 3 peripheral proteins of the oxygen-evolving complex and a large number of cofactors. It forms dimeric complexes. The D1/D2 heterodimer binds P680, chlorophylls that are the primary electron donor of PSII, and subsequent electron acceptors. It shares a non-heme iron and each subunit binds pheophytin, quinone, additional chlorophylls, carotenoids and lipids. D1 provides most of the ligands for the Mn4-Ca-O5 cluster of the oxygen-evolving complex (OEC). There is also a Cl(-1) ion associated with D1 and D2, which is required for oxygen evolution. The PSII complex binds additional chlorophylls, carotenoids and specific lipids. is required as a cofactor. Post-translationally, tyr-161 forms a radical intermediate that is referred to as redox-active TyrZ, YZ or Y-Z. In terms of processing, C-terminally processed by CTPA; processing is essential to allow assembly of the oxygen-evolving complex and thus photosynthetic growth.

The protein resides in the plastid. It localises to the chloroplast thylakoid membrane. It catalyses the reaction 2 a plastoquinone + 4 hnu + 2 H2O = 2 a plastoquinol + O2. Photosystem II (PSII) is a light-driven water:plastoquinone oxidoreductase that uses light energy to abstract electrons from H(2)O, generating O(2) and a proton gradient subsequently used for ATP formation. It consists of a core antenna complex that captures photons, and an electron transfer chain that converts photonic excitation into a charge separation. The D1/D2 (PsbA/PsbD) reaction center heterodimer binds P680, the primary electron donor of PSII as well as several subsequent electron acceptors. The polypeptide is Photosystem II protein D1 (Cryptomeria japonica (Japanese cedar)).